A 339-amino-acid chain; its full sequence is NADH-quinone oxidoreductase subunit H (339 aa).

The next 9 membrane-spanning stretches (helical) occupy residues 9 to 29 (IFPLIIIALKVVAITIPLILC), 50 to 70 (PNVVGPFGLLQPIADAVKLLF), 82 to 102 (ILFILAPMITFILSLIGWAVI), 115 to 135 (VGVLYILAISSLSVYGIIIAG), 161 to 181 (MGLVIITVLLTNGTLNLSGII), 187 to 207 (MPWWIDLMLLPMGVVFFISVL), 235 to 255 (MGFALFFLGEYANMILVSAMT), 275 to 295 (IPGFFWFVFKVGFLLFCFLWI), and 311 to 331 (GWKVFLPLTLFWVVLVSSVLV).

It belongs to the complex I subunit 1 family. In terms of assembly, NDH-1 is composed of 14 different subunits. Subunits NuoA, H, J, K, L, M, N constitute the membrane sector of the complex.

It is found in the cell inner membrane. The catalysed reaction is a quinone + NADH + 5 H(+)(in) = a quinol + NAD(+) + 4 H(+)(out). Functionally, NDH-1 shuttles electrons from NADH, via FMN and iron-sulfur (Fe-S) centers, to quinones in the respiratory chain. The immediate electron acceptor for the enzyme in this species is believed to be ubiquinone. Couples the redox reaction to proton translocation (for every two electrons transferred, four hydrogen ions are translocated across the cytoplasmic membrane), and thus conserves the redox energy in a proton gradient. This subunit may bind ubiquinone. The polypeptide is NADH-quinone oxidoreductase subunit H (Rickettsia conorii (strain ATCC VR-613 / Malish 7)).